The following is a 229-amino-acid chain: Uracil-DNA glycosylase (229 aa).

Residue aspartate 64 is the Proton acceptor of the active site.

It belongs to the uracil-DNA glycosylase (UDG) superfamily. UNG family.

It localises to the cytoplasm. The catalysed reaction is Hydrolyzes single-stranded DNA or mismatched double-stranded DNA and polynucleotides, releasing free uracil.. Its function is as follows. Excises uracil residues from the DNA which can arise as a result of misincorporation of dUMP residues by DNA polymerase or due to deamination of cytosine. This chain is Uracil-DNA glycosylase, found in Escherichia fergusonii (strain ATCC 35469 / DSM 13698 / CCUG 18766 / IAM 14443 / JCM 21226 / LMG 7866 / NBRC 102419 / NCTC 12128 / CDC 0568-73).